A 192-amino-acid polypeptide reads, in one-letter code: 7-methyl-GTP pyrophosphatase (192 aa).

Aspartate 69 acts as the Proton acceptor in catalysis.

It belongs to the Maf family. YceF subfamily. It depends on a divalent metal cation as a cofactor.

The protein localises to the cytoplasm. The enzyme catalyses N(7)-methyl-GTP + H2O = N(7)-methyl-GMP + diphosphate + H(+). Functionally, nucleoside triphosphate pyrophosphatase that hydrolyzes 7-methyl-GTP (m(7)GTP). May have a dual role in cell division arrest and in preventing the incorporation of modified nucleotides into cellular nucleic acids. The protein is 7-methyl-GTP pyrophosphatase of Pseudomonas fluorescens (strain ATCC BAA-477 / NRRL B-23932 / Pf-5).